Reading from the N-terminus, the 322-residue chain is Heterogeneous nuclear ribonucleoprotein D-like (322 aa).

Residues 1 to 36 (MTGTARSALPLPQSPARALRPSGAARAAPSLSPSRF) are disordered. R6 is subject to Omega-N-methylarginine. The span at 14 to 36 (SPARALRPSGAARAAPSLSPSRF) shows a compositional bias: low complexity. RRM domains lie at 51 to 133 (NKMF…KGKE) and 136 to 215 (KKVF…QPKE). The residue at position 64 (K64) is an N6-methyllysine. K112 participates in a covalent cross-link: Glycyl lysine isopeptide (Lys-Gly) (interchain with G-Cter in SUMO2). K119 is subject to N6-acetyllysine. S144 carries the post-translational modification Phosphoserine. 2 disordered regions span residues 216 to 251 (VYRQ…NWNQ) and 299 to 322 (SGQQ…YQPY). Residues 226 to 245 (GGRGAAAGGRGGARGRGRGQ) show a composition bias toward gly residues. The tract at residues 245–322 (QGQNWNQGFN…GNHQNNYQPY (78 aa)) is necessary for interaction with TNPO1. Residue R310 is modified to Dimethylated arginine; alternate. An Omega-N-methylarginine; alternate modification is found at R310.

Interacts with TNPO1 and ZNF148. Post-translationally, dimethylation of Arg-310 is probably of the asymmetric type.

The protein resides in the nucleus. It is found in the cytoplasm. In terms of biological role, acts as a transcriptional regulator. Promotes transcription repression. Promotes transcription activation in differentiated myotubes. Binds to double- and single-stranded DNA sequences. Binds to the transcription suppressor CATR sequence of the COX5B promoter. Binds with high affinity to RNA molecules that contain AU-rich elements (AREs) found within the 3'-UTR of many proto-oncogenes and cytokine mRNAs. Binds both to nuclear and cytoplasmic poly(A) mRNAs. Binds to poly(G) and poly(A), but not to poly(U) or poly(C) RNA homopolymers. Binds to the 5'-ACUAGC-3' RNA consensus sequence. This is Heterogeneous nuclear ribonucleoprotein D-like (Hnrnpdl) from Rattus norvegicus (Rat).